Consider the following 294-residue polypeptide: Nucleotide-binding protein CLJ_B3680 (294 aa).

8-15 is a binding site for ATP; the sequence is GLSGAGKT. GTP is bound at residue 59–62; that stretch reads DIRG.

This sequence belongs to the RapZ-like family.

Displays ATPase and GTPase activities. The protein is Nucleotide-binding protein CLJ_B3680 of Clostridium botulinum (strain 657 / Type Ba4).